A 280-amino-acid chain; its full sequence is Vacuolar protein sorting-associated protein 71 (280 aa).

The segment covering 64–73 (RSEGDGNSIS) has biased composition (polar residues). Residues 64 to 92 (RSEGDGNSISRQDDRNSKNSHSFEERYTQ) form a disordered region. The segment covering 74–92 (RQDDRNSKNSHSFEERYTQ) has biased composition (basic and acidic residues). Zn(2+) contacts are provided by Cys244, Cys247, Cys256, Cys259, Cys264, Cys268, His272, and Cys277. The HIT-type zinc finger occupies 244-277 (CSICGGYDSISSCVNCGNKICSVSCFKLHNETRC).

As to quaternary structure, belongs to the SWR1 complex at least composed of ACT1, ARP4, RVB1, RVB2, ARP6, YAF9, VPS71, VPS72, SWC3, SWC4, SWC5, SWR1 and HTZ1.

It is found in the nucleus. Its function is as follows. Participates in the catalytic exchange of histone H2A for the H2A variant HZT1, an euchromatin-specific factor, leading to chromatin remodeling and changes in transcription of targeted genes. Indirectly involved in vacuolar protein sorting. This chain is Vacuolar protein sorting-associated protein 71 (VPS71), found in Saccharomyces cerevisiae (strain ATCC 204508 / S288c) (Baker's yeast).